Here is a 587-residue protein sequence, read N- to C-terminus: Aspartate--tRNA ligase (587 aa).

An L-aspartate-binding site is contributed by E174. Residues 198–201 (QITK) are aspartate. R220 is an L-aspartate binding site. Residues 220–222 (RDE) and Q229 contribute to the ATP site. An L-aspartate-binding site is contributed by H443. E477 lines the ATP pocket. Residue R484 participates in L-aspartate binding. ATP is bound at residue 529 to 532 (GLDR).

This sequence belongs to the class-II aminoacyl-tRNA synthetase family. Type 1 subfamily. Homodimer.

It localises to the cytoplasm. The catalysed reaction is tRNA(Asp) + L-aspartate + ATP = L-aspartyl-tRNA(Asp) + AMP + diphosphate. Its function is as follows. Catalyzes the attachment of L-aspartate to tRNA(Asp) in a two-step reaction: L-aspartate is first activated by ATP to form Asp-AMP and then transferred to the acceptor end of tRNA(Asp). This chain is Aspartate--tRNA ligase, found in Streptococcus pneumoniae serotype 2 (strain D39 / NCTC 7466).